A 130-amino-acid chain; its full sequence is UPF0225 protein CE1570 (130 aa).

Belongs to the UPF0225 family.

In Corynebacterium efficiens (strain DSM 44549 / YS-314 / AJ 12310 / JCM 11189 / NBRC 100395), this protein is UPF0225 protein CE1570.